A 536-amino-acid chain; its full sequence is B3 domain-containing protein Os03g0619800 (536 aa).

The segment at residues 26-119 (MRCFLRRMAA…RYEVLILDSD (94 aa)) is a DNA-binding region (TF-B3 1). The interval 138-199 (DKTVDPVDSS…VEPQTPSGSD (62 aa)) is disordered. Composition is skewed to low complexity over residues 145 to 160 (DSSG…SSRS) and 171 to 183 (SSSE…SPSG). Positions 231-330 (VAVMKKCNLQ…AFTVHLLQAE (100 aa)) form a DNA-binding region, TF-B3 2. The interval 335-396 (RDGTDVHKIG…SDGPSEPPYI (62 aa)) is disordered. The span at 344 to 355 (GSSQNKRNSKMA) shows a compositional bias: polar residues. Residues 372–382 (SNKHGVSHESL) show a composition bias toward basic and acidic residues. A DNA-binding region (TF-B3 3) is located at residues 429–529 (ISKLAGSGGK…TMEVHIISNL (101 aa)).

The protein resides in the nucleus. The protein is B3 domain-containing protein Os03g0619800 of Oryza sativa subsp. japonica (Rice).